Here is a 955-residue protein sequence, read N- to C-terminus: MPFALGQRWISDTETDLGLGTVVAVEGRMVTLLFPATGENRMYAKEEAPVTRVSFNVGDQIASHEDWTMTVEEVQEKDGLLIYVGVRTDNDEPVALKEVFLNNFIKFNKPQDRLFAGQIDRMSRFTLRYEALINQHQRRRNPTRGLAGGRVSLIPHQLYIAHEVGHRYAPRVLLADEVGLGKTIEAGMIIHQQLLSGRAHRVLILLPETLQHQWLVEMLRRFNLHFSLFDEERCIEAFADAENPFETEQLVICSLDFLRKKRRRFEQVLEAEWDLLVVDEAHHLEWSEEAPSRAYEMVEALAEQVPGVLLLTATPDQLGHQSHFARLRLLDPERFYDYDAFLAEEQAYGQVASAAQELLDGETLSDEAKRILASQLEGLDLSDAAARQQAVAKLLDQHGTGRVLFRNSRANIQGFPERHLNVYPMPLPEQYKTAIKVMGMMGGNGGDLQTRALRYLYPEKIFQQFEGDNATWTQFDPRVEWLLELLLSARQQKVLVICSEAATAIALEEALRTREGIRGAVFHEGMSILERDKASAYFAQQEGGAQVLLCSEIGSEGRNFQFASHLVLFDLPLNPDLLEQRIGRLDRIGQQNTVEIHVPYLEGTSQRALQLWYHDGLDAFEQTCPTARPVFEAVRDELFELLAANTGDQAPLDALLVKTRELHEPLKARLEQGRDRLLEIHSSGGAAAQQLVDKLAAEDDDTGMISFALKMFDEIGVNQDDRGENALVLTPGDHMLVSSFPGLPQDGMTITFDRNTALSRDDMALLSWDHPMMRGGIDLILGSEIGATSVALLKNKALPIGSILLELIFVAESAAHPQLYRFMPPTPIRLLMDKNGQNLGEKVAFDAFNRQLTPVNRHLGSKLVTASQPVIHGLIGKGQAIAEELKGGIVDKARAQMAQTLQQDLDRLEALKAVNPNVRDSELDYLRNLQAELHHLIDQTQLKLDAIRFIVVTHN.

Residues 163 to 333 (EVGHRYAPRV…FARLRLLDPE (171 aa)) enclose the Helicase ATP-binding domain. 176–183 (DEVGLGKT) contributes to the ATP binding site. Residues 279–282 (DEAH) carry the DEAH box motif. The region spanning 478 to 642 (RVEWLLELLL…AVRDELFELL (165 aa)) is the Helicase C-terminal domain.

Belongs to the SNF2/RAD54 helicase family. RapA subfamily. As to quaternary structure, interacts with the RNAP. Has a higher affinity for the core RNAP than for the holoenzyme. Its ATPase activity is stimulated by binding to RNAP.

Functionally, transcription regulator that activates transcription by stimulating RNA polymerase (RNAP) recycling in case of stress conditions such as supercoiled DNA or high salt concentrations. Probably acts by releasing the RNAP, when it is trapped or immobilized on tightly supercoiled DNA. Does not activate transcription on linear DNA. Probably not involved in DNA repair. The chain is RNA polymerase-associated protein RapA from Aeromonas hydrophila subsp. hydrophila (strain ATCC 7966 / DSM 30187 / BCRC 13018 / CCUG 14551 / JCM 1027 / KCTC 2358 / NCIMB 9240 / NCTC 8049).